The sequence spans 156 residues: 6,7-dimethyl-8-ribityllumazine synthase (156 aa).

Residues W33, S64 to E66, and V86 to L88 each bind 5-amino-6-(D-ribitylamino)uracil. Residue E91–T92 participates in (2S)-2-hydroxy-3-oxobutyl phosphate binding. The Proton donor role is filled by H94. A 5-amino-6-(D-ribitylamino)uracil-binding site is contributed by I119. A (2S)-2-hydroxy-3-oxobutyl phosphate-binding site is contributed by R133.

It belongs to the DMRL synthase family.

It catalyses the reaction (2S)-2-hydroxy-3-oxobutyl phosphate + 5-amino-6-(D-ribitylamino)uracil = 6,7-dimethyl-8-(1-D-ribityl)lumazine + phosphate + 2 H2O + H(+). The protein operates within cofactor biosynthesis; riboflavin biosynthesis; riboflavin from 2-hydroxy-3-oxobutyl phosphate and 5-amino-6-(D-ribitylamino)uracil: step 1/2. In terms of biological role, catalyzes the formation of 6,7-dimethyl-8-ribityllumazine by condensation of 5-amino-6-(D-ribitylamino)uracil with 3,4-dihydroxy-2-butanone 4-phosphate. This is the penultimate step in the biosynthesis of riboflavin. This is 6,7-dimethyl-8-ribityllumazine synthase from Tropheryma whipplei (strain TW08/27) (Whipple's bacillus).